Reading from the N-terminus, the 203-residue chain is Large ribosomal subunit protein uL13 (203 aa).

At alanine 2 the chain carries N-acetylalanine. Arginine 59 is subject to Citrulline. At serine 77 the chain carries Phosphoserine. A Citrulline modification is found at arginine 140. Position 191 is an N6-acetyllysine (lysine 191).

The protein belongs to the universal ribosomal protein uL13 family. As to quaternary structure, component of the 60S ribosome. Component of the GAIT complex. Interacts with EIF4G1. Phosphorylation at Ser-77 upon interferon-gamma treatment in monocytes involves a DAPK1-DAPK3 kinase cascade and is causing release from the ribosome, association with the GAIT complex and subsequent involvement in transcript-selective translation inhibition. Post-translationally, citrullinated by PADI4.

The protein localises to the cytoplasm. Associated with ribosomes but is not required for canonical ribosome function and has extra-ribosomal functions. Component of the GAIT (gamma interferon-activated inhibitor of translation) complex which mediates interferon-gamma-induced transcript-selective translation inhibition in inflammation processes. Upon interferon-gamma activation and subsequent phosphorylation dissociates from the ribosome and assembles into the GAIT complex which binds to stem loop-containing GAIT elements in the 3'-UTR of diverse inflammatory mRNAs (such as ceruplasmin) and suppresses their translation. In the GAIT complex interacts with m7G cap-bound eIF4G at or near the eIF3-binding site and blocks the recruitment of the 43S ribosomal complex. Involved in methylation of rRNA. This Oryctolagus cuniculus (Rabbit) protein is Large ribosomal subunit protein uL13 (RPL13A).